The primary structure comprises 156 residues: uncharacterized protein (156 aa).

Disordered stretches follow at residues lysine 22–lysine 64 and alanine 81–glutamate 156. Over residues proline 43–glutamine 56 the composition is skewed to acidic residues. Serine 50 is modified (phosphoserine). Lysine 108 carries the post-translational modification N6-acetyllysine. Basic and acidic residues predominate over residues threonine 121–lysine 134. A Phosphoserine modification is found at serine 148.

This is an uncharacterized protein from Bos taurus (Bovine).